A 122-amino-acid chain; its full sequence is UPF0102 protein CPR_1677 (122 aa).

Belongs to the UPF0102 family.

This Clostridium perfringens (strain SM101 / Type A) protein is UPF0102 protein CPR_1677.